The primary structure comprises 422 residues: MFYDRAKIYVKGGDGGNGCIAMRREKYVPFGGPWGGDGGHGGDVTFIADEGLNTLQDFRYKKHFKAERGGHGMGKNMNGPAGEDLLVKVPTGTVVREAETGRLIADLLENGQQVVIAKGGRGGRGNVHFASSSNKAPRIAEKGEPGEELWLELELKVIADVGLIGFPNAGKSTFISMVSAAKPKIADYPFTTLVPNLGVVSAGEEGSFVLADIPGLVEGASQGVGLGHEFLRHTERTRLLIHVVDTAGTEGRDPVEDIKIINRELELYDPRLSTRPQIIAANKMDIIPLAEENLARLREEFGEQFEIYPISAATNQGLDKVIHRVAELLAQLPKIEPEQPEEDVMFEPEERFNIKRDIDGNWRVTGKEIERHVAMTYLEEDQSLERLQRIMKMMGLENGLVEAGVKVGDIVRIGDWEFEWSE.

The Obg domain maps to 1–158 (MFYDRAKIYV…LWLELELKVI (158 aa)). The OBG-type G domain maps to 159-330 (ADVGLIGFPN…VIHRVAELLA (172 aa)). GTP is bound by residues 165–172 (GFPNAGKS), 190–194 (FTTLV), 212–215 (DIPG), 282–285 (NKMD), and 311–313 (SAA). Residues S172 and T192 each coordinate Mg(2+). The OCT domain maps to 344–422 (VMFEPEERFN…IGDWEFEWSE (79 aa)).

The protein belongs to the TRAFAC class OBG-HflX-like GTPase superfamily. OBG GTPase family. In terms of assembly, monomer. The cofactor is Mg(2+).

Its subcellular location is the cytoplasm. An essential GTPase which binds GTP, GDP and possibly (p)ppGpp with moderate affinity, with high nucleotide exchange rates and a fairly low GTP hydrolysis rate. Plays a role in control of the cell cycle, stress response, ribosome biogenesis and in those bacteria that undergo differentiation, in morphogenesis control. The polypeptide is GTPase Obg (Desulforamulus reducens (strain ATCC BAA-1160 / DSM 100696 / MI-1) (Desulfotomaculum reducens)).